The chain runs to 363 residues: MRHLVLRREGGVKFYAPDPEKYGGIYSAPVFYNPAMEKNRTLSTLLLKAYGKGGLVVCEPLSGTGVRGIRYAVESGVVGKLILNDISKEAVELIKKNLEINGVDAEVYNEDANVLLHKLKDSCDVVDIDPFGSPAPFIHGAFRALKEEGLICATATDTAVLVGRYPRKCLRRYGSVIVKTPFYIEVGLRNLLGYIARVAAAEDYKITPLMSYWEGHYFRVCAYAARGARDADDNFHHIAYIKYERGVRKILHAQSEGSSGPLWVGPLGDPLIINKMSEIGPYQDFLKILAEEYSISAPWFYRLPEFAAGGKSPTLKEAVGVLRAAGIYAVRTHMAPDGFKADGEYGEVLMAFKRYISSAHSLQ.

Positions 5–352 (VLRREGGVKF…GEYGEVLMAF (348 aa)) constitute a Trm1 methyltransferase domain. Arg-40, Arg-67, Asp-85, Asp-111, and Ala-112 together coordinate S-adenosyl-L-methionine.

The protein belongs to the class I-like SAM-binding methyltransferase superfamily. Trm1 family.

It carries out the reaction guanosine(26) in tRNA + 2 S-adenosyl-L-methionine = N(2)-dimethylguanosine(26) in tRNA + 2 S-adenosyl-L-homocysteine + 2 H(+). Its function is as follows. Dimethylates a single guanine residue at position 26 of a number of tRNAs using S-adenosyl-L-methionine as donor of the methyl groups. This chain is tRNA (guanine(26)-N(2))-dimethyltransferase, found in Pyrobaculum aerophilum (strain ATCC 51768 / DSM 7523 / JCM 9630 / CIP 104966 / NBRC 100827 / IM2).